Reading from the N-terminus, the 273-residue chain is Putative pyruvate, phosphate dikinase regulatory protein (273 aa).

An ADP-binding site is contributed by 149-156 (GPSRTSKT).

Belongs to the pyruvate, phosphate/water dikinase regulatory protein family. PDRP subfamily.

The enzyme catalyses N(tele)-phospho-L-histidyl/L-threonyl-[pyruvate, phosphate dikinase] + ADP = N(tele)-phospho-L-histidyl/O-phospho-L-threonyl-[pyruvate, phosphate dikinase] + AMP + H(+). The catalysed reaction is N(tele)-phospho-L-histidyl/O-phospho-L-threonyl-[pyruvate, phosphate dikinase] + phosphate + H(+) = N(tele)-phospho-L-histidyl/L-threonyl-[pyruvate, phosphate dikinase] + diphosphate. Bifunctional serine/threonine kinase and phosphorylase involved in the regulation of the pyruvate, phosphate dikinase (PPDK) by catalyzing its phosphorylation/dephosphorylation. The polypeptide is Putative pyruvate, phosphate dikinase regulatory protein (Rickettsia bellii (strain RML369-C)).